We begin with the raw amino-acid sequence, 163 residues long: Phosphopantetheine adenylyltransferase (163 aa).

Residue Thr-10 participates in substrate binding. Residues 10 to 11 and His-18 each bind ATP; that span reads TF. Substrate contacts are provided by Lys-42, Leu-75, and Arg-89. Residues 90–92, Glu-100, and 125–131 each bind ATP; these read GVR and YTYVASS.

It belongs to the bacterial CoaD family. In terms of assembly, homohexamer. Mg(2+) is required as a cofactor.

Its subcellular location is the cytoplasm. The enzyme catalyses (R)-4'-phosphopantetheine + ATP + H(+) = 3'-dephospho-CoA + diphosphate. It participates in cofactor biosynthesis; coenzyme A biosynthesis; CoA from (R)-pantothenate: step 4/5. Its function is as follows. Reversibly transfers an adenylyl group from ATP to 4'-phosphopantetheine, yielding dephospho-CoA (dPCoA) and pyrophosphate. The sequence is that of Phosphopantetheine adenylyltransferase from Pelodictyon phaeoclathratiforme (strain DSM 5477 / BU-1).